Here is a 262-residue protein sequence, read N- to C-terminus: Putative phosphatase HI_0003 (262 aa).

The Nucleophile role is filled by D9. D9 and N11 together coordinate Mg(2+). Phosphate contacts are provided by residues 43-44 and K189; that span reads SA. Residue D212 coordinates Mg(2+). N215 is a phosphate binding site.

This sequence belongs to the HAD-like hydrolase superfamily. Cof family. Mg(2+) is required as a cofactor.

The polypeptide is Putative phosphatase HI_0003 (Haemophilus influenzae (strain ATCC 51907 / DSM 11121 / KW20 / Rd)).